The primary structure comprises 267 residues: L-erythrulose-1-phosphate isomerase (267 aa).

Histidine 95 (electrophile) is an active-site residue. Glutamate 168 acts as the Proton acceptor in catalysis. Positions 174 and 211 each coordinate substrate.

This sequence belongs to the triosephosphate isomerase family. As to quaternary structure, homodimer.

The protein localises to the cytoplasm. It catalyses the reaction L-erythrulose 1-phosphate = D-erythrulose 4-phosphate. It participates in carbohydrate metabolism; erythritol degradation. Functionally, catalyzes the isomerization of D-erythrulose-4P to L-erythrulose-1P. This chain is L-erythrulose-1-phosphate isomerase, found in Rhizobium etli (strain ATCC 51251 / DSM 11541 / JCM 21823 / NBRC 15573 / CFN 42).